A 193-amino-acid polypeptide reads, in one-letter code: MTEYLLLLIGTVLVNNFVLVKFLGLCPFMGVSKKLESAIGMGLATTFVLTLASVCSYLIETYILAPLGIEYLRTMSFILVIAVVVQFTEMVVHKTSPTLYRVLGIFLPLITTNCAVLGVALLNVTENHNFIESIIYGFGAAVGFSLVLILFSAMRERIAAADVPLPFKGASIAMITAGLMSLAFMGFTGLVKL.

6 consecutive transmembrane segments (helical) span residues 5 to 25 (LLLL…FLGL), 39 to 59 (IGMG…SYLI), 63 to 83 (ILAP…VIAV), 102 to 122 (VLGI…VALL), 134 to 154 (IIYG…FSAM), and 171 to 191 (SIAM…TGLV).

This sequence belongs to the NqrDE/RnfAE family. As to quaternary structure, the complex is composed of six subunits: RnfA, RnfB, RnfC, RnfD, RnfE and RnfG.

The protein localises to the cell inner membrane. Functionally, part of a membrane-bound complex that couples electron transfer with translocation of ions across the membrane. In Aliivibrio salmonicida (strain LFI1238) (Vibrio salmonicida (strain LFI1238)), this protein is Ion-translocating oxidoreductase complex subunit A.